We begin with the raw amino-acid sequence, 486 residues long: Membrane-bound lytic murein transglycosylase F (486 aa).

A signal peptide spans 1 to 21 (MTRIKLSYFTIGLVALLLALA). The non-LT domain stretch occupies residues 22–268 (LWPNIPWRNG…RLEEKYLGHV (247 aa)). Residues 269–486 (GSFDYVDTKT…VVGPGWSIGD (218 aa)) form an LT domain region. The active site involves glutamate 313.

It in the N-terminal section; belongs to the bacterial solute-binding protein 3 family. In the C-terminal section; belongs to the transglycosylase Slt family.

It localises to the cell outer membrane. The enzyme catalyses Exolytic cleavage of the (1-&gt;4)-beta-glycosidic linkage between N-acetylmuramic acid (MurNAc) and N-acetylglucosamine (GlcNAc) residues in peptidoglycan, from either the reducing or the non-reducing ends of the peptidoglycan chains, with concomitant formation of a 1,6-anhydrobond in the MurNAc residue.. Its function is as follows. Murein-degrading enzyme that degrades murein glycan strands and insoluble, high-molecular weight murein sacculi, with the concomitant formation of a 1,6-anhydromuramoyl product. Lytic transglycosylases (LTs) play an integral role in the metabolism of the peptidoglycan (PG) sacculus. Their lytic action creates space within the PG sacculus to allow for its expansion as well as for the insertion of various structures such as secretion systems and flagella. The polypeptide is Membrane-bound lytic murein transglycosylase F (Yersinia pseudotuberculosis serotype I (strain IP32953)).